A 117-amino-acid chain; its full sequence is Ig heavy chain V region MOPC 104E (117 aa).

The 116-residue stretch at Glu1–Ser116 folds into the Ig-like domain. The cysteines at positions 22 and 96 are disulfide-linked. The N-linked (GlcNAc...) (high mannose) asparagine; atypical glycan is linked to Asn55.

This Mus musculus (Mouse) protein is Ig heavy chain V region MOPC 104E.